Reading from the N-terminus, the 136-residue chain is 1,4-dihydroxy-2-naphthoyl-CoA hydrolase (136 aa).

The active site involves D16.

It belongs to the 4-hydroxybenzoyl-CoA thioesterase family. DHNA-CoA hydrolase subfamily.

The enzyme catalyses 1,4-dihydroxy-2-naphthoyl-CoA + H2O = 1,4-dihydroxy-2-naphthoate + CoA + H(+). It functions in the pathway cofactor biosynthesis; phylloquinone biosynthesis. Its pathway is quinol/quinone metabolism; 1,4-dihydroxy-2-naphthoate biosynthesis; 1,4-dihydroxy-2-naphthoate from chorismate: step 7/7. Catalyzes the hydrolysis of 1,4-dihydroxy-2-naphthoyl-CoA (DHNA-CoA) to 1,4-dihydroxy-2-naphthoate (DHNA), a reaction involved in phylloquinone (vitamin K1) biosynthesis. The chain is 1,4-dihydroxy-2-naphthoyl-CoA hydrolase from Synechococcus sp. (strain ATCC 27144 / PCC 6301 / SAUG 1402/1) (Anacystis nidulans).